The chain runs to 320 residues: Beta-ketoacyl-[acyl-carrier-protein] synthase III (320 aa).

Catalysis depends on residues Cys113 and His247. Residues 248-252 (QANRR) are ACP-binding. Asn277 is an active-site residue.

The protein belongs to the thiolase-like superfamily. FabH family. Homodimer.

It localises to the cytoplasm. The catalysed reaction is malonyl-[ACP] + acetyl-CoA + H(+) = 3-oxobutanoyl-[ACP] + CO2 + CoA. It participates in lipid metabolism; fatty acid biosynthesis. In terms of biological role, catalyzes the condensation reaction of fatty acid synthesis by the addition to an acyl acceptor of two carbons from malonyl-ACP. Catalyzes the first condensation reaction which initiates fatty acid synthesis and may therefore play a role in governing the total rate of fatty acid production. Possesses both acetoacetyl-ACP synthase and acetyl transacylase activities. Its substrate specificity determines the biosynthesis of branched-chain and/or straight-chain of fatty acids. The chain is Beta-ketoacyl-[acyl-carrier-protein] synthase III from Acidiphilium cryptum (strain JF-5).